The following is a 92-amino-acid chain: Isoleucine--tRNA ligase (92 aa).

Positions 55, 58, 75, and 78 each coordinate Zn(2+).

This sequence belongs to the class-I aminoacyl-tRNA synthetase family. IleS type 1 subfamily. Monomer. The cofactor is Zn(2+).

It localises to the cytoplasm. It catalyses the reaction tRNA(Ile) + L-isoleucine + ATP = L-isoleucyl-tRNA(Ile) + AMP + diphosphate. In terms of biological role, catalyzes the attachment of isoleucine to tRNA(Ile). As IleRS can inadvertently accommodate and process structurally similar amino acids such as valine, to avoid such errors it has two additional distinct tRNA(Ile)-dependent editing activities. One activity is designated as 'pretransfer' editing and involves the hydrolysis of activated Val-AMP. The other activity is designated 'posttransfer' editing and involves deacylation of mischarged Val-tRNA(Ile). This is Isoleucine--tRNA ligase (ileS) from Klebsiella aerogenes (Enterobacter aerogenes).